The sequence spans 114 residues: MAEITSAKAMARTVRVSPRKSRLVLDNIRGKSVADAIAILTFTPNKAAEIILKVLNSAVANAENNFGLDKANLVVSEAFANEGPTMKRFRPRAKGSASPINKRTAHITVAVAEK.

It belongs to the universal ribosomal protein uL22 family. As to quaternary structure, part of the 50S ribosomal subunit.

In terms of biological role, this protein binds specifically to 23S rRNA; its binding is stimulated by other ribosomal proteins, e.g. L4, L17, and L20. It is important during the early stages of 50S assembly. It makes multiple contacts with different domains of the 23S rRNA in the assembled 50S subunit and ribosome. Functionally, the globular domain of the protein is located near the polypeptide exit tunnel on the outside of the subunit, while an extended beta-hairpin is found that lines the wall of the exit tunnel in the center of the 70S ribosome. This Streptococcus pneumoniae (strain Taiwan19F-14) protein is Large ribosomal subunit protein uL22.